Reading from the N-terminus, the 69-residue chain is NADH dehydrogenase [ubiquinone] 1 beta subcomplex subunit 2 (69 aa).

The protein belongs to the complex I NDUFB2 subunit family. Complex I is composed of at least 49 different subunits.

It localises to the mitochondrion inner membrane. Functionally, accessory subunit of the mitochondrial membrane respiratory chain NADH dehydrogenase (Complex I), that is believed not to be involved in catalysis. Complex I functions in the transfer of electrons from NADH to the respiratory chain. The immediate electron acceptor for the enzyme is believed to be ubiquinone. This chain is NADH dehydrogenase [ubiquinone] 1 beta subcomplex subunit 2, found in Arabidopsis thaliana (Mouse-ear cress).